The chain runs to 247 residues: Coproheme decarboxylase (247 aa).

Fe-coproporphyrin III-binding positions include arginine 129, 143 to 147, histidine 170, glutamine 183, and serine 221; that span reads YPMDK. Residue tyrosine 143 is part of the active site.

The protein belongs to the ChdC family. Type 1 subfamily. It depends on Fe-coproporphyrin III as a cofactor.

The enzyme catalyses Fe-coproporphyrin III + 2 H2O2 + 2 H(+) = heme b + 2 CO2 + 4 H2O. It carries out the reaction Fe-coproporphyrin III + H2O2 + H(+) = harderoheme III + CO2 + 2 H2O. The catalysed reaction is harderoheme III + H2O2 + H(+) = heme b + CO2 + 2 H2O. The protein operates within porphyrin-containing compound metabolism; protoheme biosynthesis. Involved in coproporphyrin-dependent heme b biosynthesis. Catalyzes the decarboxylation of Fe-coproporphyrin III (coproheme) to heme b (protoheme IX), the last step of the pathway. The reaction occurs in a stepwise manner with a three-propionate intermediate. This Bacillus anthracis protein is Coproheme decarboxylase.